Here is a 461-residue protein sequence, read N- to C-terminus: Polycomb group protein FIE1 (461 aa).

The span at 1–11 (MPPSKARRKRS) shows a compositional bias: basic residues. Positions 1–56 (MPPSKARRKRSLRDITATVATGTVANSKPGSSSTNEGKQQDKKKEGPQEPDIPPLP) are disordered. Positions 18 to 37 (TVATGTVANSKPGSSSTNEG) are enriched in polar residues. Positions 38-47 (KQQDKKKEGP) are enriched in basic and acidic residues. 6 WD repeats span residues 143-186 (DKDE…LDKS), 189-229 (GHGG…CILV), 235-275 (GHRH…IYVE), 301-338 (VHSD…RRPG), 351-391 (PKCS…PVLI), and 398-437 (ECKS…ASSS). The interval 429–461 (EVDPAASSSKPDQAAAPAAGVGAGAGADADADA) is disordered. Positions 432–448 (PAASSSKPDQAAAPAAG) are enriched in low complexity.

This sequence belongs to the WD repeat ESC family. In terms of tissue distribution, specifically expressed in kernel starting from 6 days after pollination.

The protein localises to the nucleus. Its function is as follows. Polycomb group (PcG) protein. PcG proteins act by forming multiprotein complexes, which are required to maintain the transcriptionally repressive state of homeotic genes throughout development. PcG proteins are not required to initiate repression, but to maintain it during later stages of development. They probably act via the methylation of histones, rendering chromatin heritably changed in its expressibility. In Zea mays (Maize), this protein is Polycomb group protein FIE1 (FIE1).